Consider the following 244-residue polypeptide: Phosphoadenosine 5'-phosphosulfate reductase (244 aa).

Catalysis depends on C239, which acts as the Nucleophile; cysteine thiosulfonate intermediate.

Belongs to the PAPS reductase family. CysH subfamily.

The protein resides in the cytoplasm. It carries out the reaction [thioredoxin]-disulfide + sulfite + adenosine 3',5'-bisphosphate + 2 H(+) = [thioredoxin]-dithiol + 3'-phosphoadenylyl sulfate. It participates in sulfur metabolism; hydrogen sulfide biosynthesis; sulfite from sulfate: step 3/3. In terms of biological role, catalyzes the formation of sulfite from phosphoadenosine 5'-phosphosulfate (PAPS) using thioredoxin as an electron donor. This Klebsiella pneumoniae (strain 342) protein is Phosphoadenosine 5'-phosphosulfate reductase.